The primary structure comprises 59 residues: Sec-independent protein translocase protein TatA 1 (59 aa).

A helical membrane pass occupies residues 3–23 (FPLPWQLILILLVILVIFGAS).

It belongs to the TatA/E family. As to quaternary structure, forms a complex with TatC.

Its subcellular location is the cell inner membrane. In terms of biological role, part of the twin-arginine translocation (Tat) system that transports large folded proteins containing a characteristic twin-arginine motif in their signal peptide across membranes. TatA could form the protein-conducting channel of the Tat system. This chain is Sec-independent protein translocase protein TatA 1, found in Aquifex aeolicus (strain VF5).